Here is a 277-residue protein sequence, read N- to C-terminus: S-formylglutathione hydrolase FrmB (277 aa).

Catalysis depends on charge relay system residues Ser145, Asp221, and His254.

The protein belongs to the esterase D family.

The catalysed reaction is S-formylglutathione + H2O = formate + glutathione + H(+). Functionally, serine hydrolase involved in the detoxification of formaldehyde. Hydrolyzes S-formylglutathione to glutathione and formate. This chain is S-formylglutathione hydrolase FrmB (frmB), found in Escherichia coli O1:K1 / APEC.